Consider the following 334-residue polypeptide: L-lactate dehydrogenase B chain (334 aa).

Alanine 2 carries the post-translational modification N-acetylalanine. Lysine 7 carries the post-translational modification N6-acetyllysine. 31-53 (QVGMACAISILGKSLADELALVD) contributes to the NAD(+) binding site. Serine 44 bears the Phosphoserine mark. Lysine 58 is subject to N6-acetyllysine. Position 100 (arginine 100) interacts with NAD(+). Arginine 107 lines the substrate pocket. Lysine 119 carries the N6-acetyllysine modification. Asparagine 139 contacts NAD(+). Residues asparagine 139 and arginine 170 each contribute to the substrate site. Histidine 194 serves as the catalytic Proton acceptor. Position 240 is a phosphotyrosine (tyrosine 240). Residue threonine 249 participates in substrate binding. An N6-acetyllysine modification is found at lysine 329.

This sequence belongs to the LDH/MDH superfamily. LDH family. In terms of assembly, homotetramer. Interacts with PTEN upstream reading frame protein MP31; the interaction leads to inhibition of mitochondrial lactate dehydrogenase activity, preventing conversion of lactate to pyruvate in mitochondria. In terms of tissue distribution, predominantly expressed in aerobic tissues such as cardiac muscle.

It is found in the cytoplasm. Its subcellular location is the mitochondrion inner membrane. The catalysed reaction is (S)-lactate + NAD(+) = pyruvate + NADH + H(+). It participates in fermentation; pyruvate fermentation to lactate; (S)-lactate from pyruvate: step 1/1. Interconverts simultaneously and stereospecifically pyruvate and lactate with concomitant interconversion of NADH and NAD(+). The sequence is that of L-lactate dehydrogenase B chain (LDHB) from Homo sapiens (Human).